Here is a 587-residue protein sequence, read N- to C-terminus: Putative inactive receptor-like protein kinase At1g64210 (587 aa).

The signal sequence occupies residues 1–19 (MQIFLFFFSLILCFVLISS). Over 20-232 (QTLEDDKKAL…KTPFGLSQLA (213 aa)) the chain is Extracellular. N-linked (GlcNAc...) asparagine glycosylation is found at Asn-37 and Asn-44. LRR repeat units follow at residues 89-112 (SLKFLSLRKNHFTGDFPSDFTNLK), 113-136 (SLTHLYLQHNHLSGPLLAIFSELK), 137-160 (NLKVLDLSNNGFNGSIPTSLSGLT), 161-183 (SLQVLNLANNSFSGEIPNLHLPK), and 184-205 (LSQINLSNNKLIGTIPKSLQRF). Residues Asn-149, Asn-169, Asn-188, and Asn-214 are each glycosylated (N-linked (GlcNAc...) asparagine). A helical transmembrane segment spans residues 233–253 (FLLILSAACVLCVSGLSFIMI). Over 254–587 (TCFGKTRISG…IEDIRSVDAE (334 aa)) the chain is Cytoplasmic. Residues 307–581 (SSSAEVLGKG…AQVLKLIEDI (275 aa)) form the Protein kinase domain. Ser-309 carries the phosphoserine modification. ATP is bound by residues 313-321 (LGKGAFGTT) and Lys-335. Ser-386 is subject to Phosphoserine. Phosphothreonine occurs at positions 462, 463, 466, and 477.

It is found in the cell membrane. The polypeptide is Putative inactive receptor-like protein kinase At1g64210 (Arabidopsis thaliana (Mouse-ear cress)).